A 116-amino-acid polypeptide reads, in one-letter code: NADH-ubiquinone oxidoreductase chain 3 (116 aa).

The next 3 helical transmembrane spans lie at 3–23 (LITTIITITITLSAVLATISF), 56–76 (FFLIAILFLLFDLEIALLLPL), and 87–107 (LTLIWSTAVLALLTLGLIYEW).

The protein belongs to the complex I subunit 3 family.

Its subcellular location is the mitochondrion membrane. It catalyses the reaction a ubiquinone + NADH + 5 H(+)(in) = a ubiquinol + NAD(+) + 4 H(+)(out). Its function is as follows. Core subunit of the mitochondrial membrane respiratory chain NADH dehydrogenase (Complex I) that is believed to belong to the minimal assembly required for catalysis. Complex I functions in the transfer of electrons from NADH to the respiratory chain. The immediate electron acceptor for the enzyme is believed to be ubiquinone. The polypeptide is NADH-ubiquinone oxidoreductase chain 3 (MT-ND3) (Oncorhynchus mykiss (Rainbow trout)).